Here is a 1063-residue protein sequence, read N- to C-terminus: Probable hemoglobin and hemoglobin-haptoglobin-binding protein 1 (1063 aa).

Positions 1-24 (MTNFKFSLLACSIAFALNASIAYA) are cleaved as a signal peptide. Repeat copies occupy residues 26-29 (QPTN), 30-33 (QPTN), 34-37 (QPTN), 38-41 (QPTN), 42-45 (QPTN), 46-49 (QPTN), and 50-53 (QPTN). Positions 26 to 53 (QPTNQPTNQPTNQPTNQPTNQPTNQPTN) are 7 X 4 AA tandem repeats of Q-P-T-N. Residues 28–55 (TNQPTNQPTNQPTNQPTNQPTNQPTNQN) are compositionally biased toward low complexity. The segment at 28–57 (TNQPTNQPTNQPTNQPTNQPTNQPTNQNSN) is disordered. A TonB box motif is present at residues 63–70 (EQINVSGS). A TBDR plug domain is found at 66–200 (NVSGSSENIN…LGGSVIFETK (135 aa)). In terms of domain architecture, TBDR beta-barrel spans 208–1063 (DKDYYLSYKR…NYRMSVQFEF (856 aa)). The short motif at 1046–1063 (NRFYAPGRNYRMSVQFEF) is the TonB C-terminal box element.

Belongs to the TonB-dependent receptor family. Hemoglobin/haptoglobin binding protein subfamily.

The protein localises to the cell outer membrane. In terms of biological role, acts as a receptor for hemoglobin or the hemoglobin/haptoglobin complex of the human host and is required for heme uptake. In Haemophilus influenzae (strain ATCC 51907 / DSM 11121 / KW20 / Rd), this protein is Probable hemoglobin and hemoglobin-haptoglobin-binding protein 1.